The primary structure comprises 256 residues: Ubiquinone/menaquinone biosynthesis C-methyltransferase UbiE (256 aa).

Residues M1–P12 show a composition bias toward basic and acidic residues. A disordered region spans residues M1–V21. S-adenosyl-L-methionine-binding positions include T79, D100, and D128–A129.

The protein belongs to the class I-like SAM-binding methyltransferase superfamily. MenG/UbiE family.

The catalysed reaction is a 2-demethylmenaquinol + S-adenosyl-L-methionine = a menaquinol + S-adenosyl-L-homocysteine + H(+). It carries out the reaction a 2-methoxy-6-(all-trans-polyprenyl)benzene-1,4-diol + S-adenosyl-L-methionine = a 5-methoxy-2-methyl-3-(all-trans-polyprenyl)benzene-1,4-diol + S-adenosyl-L-homocysteine + H(+). The protein operates within quinol/quinone metabolism; menaquinone biosynthesis; menaquinol from 1,4-dihydroxy-2-naphthoate: step 2/2. Its pathway is cofactor biosynthesis; ubiquinone biosynthesis. In terms of biological role, methyltransferase required for the conversion of demethylmenaquinol (DMKH2) to menaquinol (MKH2) and the conversion of 2-polyprenyl-6-methoxy-1,4-benzoquinol (DDMQH2) to 2-polyprenyl-3-methyl-6-methoxy-1,4-benzoquinol (DMQH2). The protein is Ubiquinone/menaquinone biosynthesis C-methyltransferase UbiE of Pseudomonas putida (strain W619).